Here is a 492-residue protein sequence, read N- to C-terminus: Protein nucleotidyltransferase YdiU (492 aa).

8 residues coordinate ATP: Gly-88, Gly-90, Arg-91, Lys-111, Asp-123, Gly-124, Arg-174, and Arg-181. Asp-250 (proton acceptor) is an active-site residue. The Mg(2+) site is built by Asn-251 and Asp-260. Asp-260 contributes to the ATP binding site.

Belongs to the SELO family. Mg(2+) serves as cofactor. It depends on Mn(2+) as a cofactor.

The enzyme catalyses L-seryl-[protein] + ATP = 3-O-(5'-adenylyl)-L-seryl-[protein] + diphosphate. It carries out the reaction L-threonyl-[protein] + ATP = 3-O-(5'-adenylyl)-L-threonyl-[protein] + diphosphate. The catalysed reaction is L-tyrosyl-[protein] + ATP = O-(5'-adenylyl)-L-tyrosyl-[protein] + diphosphate. It catalyses the reaction L-histidyl-[protein] + UTP = N(tele)-(5'-uridylyl)-L-histidyl-[protein] + diphosphate. The enzyme catalyses L-seryl-[protein] + UTP = O-(5'-uridylyl)-L-seryl-[protein] + diphosphate. It carries out the reaction L-tyrosyl-[protein] + UTP = O-(5'-uridylyl)-L-tyrosyl-[protein] + diphosphate. In terms of biological role, nucleotidyltransferase involved in the post-translational modification of proteins. It can catalyze the addition of adenosine monophosphate (AMP) or uridine monophosphate (UMP) to a protein, resulting in modifications known as AMPylation and UMPylation. This chain is Protein nucleotidyltransferase YdiU, found in Rhodopseudomonas palustris (strain TIE-1).